Here is a 916-residue protein sequence, read N- to C-terminus: Ubiquitin carboxyl-terminal hydrolase 20 (916 aa).

The segment at 6–111 (DLCPHLDCIG…SSSARLSEQD (106 aa)) adopts a UBP-type zinc-finger fold. Cysteine 8, histidine 10, cysteine 30, cysteine 33, cysteine 43, cysteine 48, cysteine 53, histidine 60, histidine 64, histidine 70, cysteine 83, and cysteine 86 together coordinate Zn(2+). Phosphoserine occurs at positions 112, 132, and 134. Residues 145-687 (TGMKNLGNSC…EAYVLFYRKS (543 aa)) form the USP domain. Cysteine 154 acts as the Nucleophile in catalysis. The interval 258–420 (LTDARDSDSS…PPRASPVRMG (163 aa)) is disordered. Position 259 is a phosphothreonine (threonine 259). Residues 260 to 280 (DARDSDSSDTDERRDGDRSPS) are compositionally biased toward basic and acidic residues. Residue serine 306 is modified to Phosphoserine. The span at 317-333 (EAGRAISEKERMKDRKF) shows a compositional bias: basic and acidic residues. At serine 369 the chain carries Phosphoserine. Position 378 is a phosphothreonine (threonine 378). Residues serine 410 and serine 415 each carry the phosphoserine modification. The active-site Proton acceptor is histidine 645. DUSP domains lie at 689–782 (EEAM…LYVC) and 791–894 (ALAK…RQSV).

The protein belongs to the peptidase C19 family. USP20/USP33 subfamily. Interacts with VHL, leading to its ubiquitination and subsequent degradation. Interacts with CCP110. Interacts with DIO2. Interacts with HIF1A. Interacts with ADRB2. Interacts with USP18. In terms of processing, ubiquitinated via a VHL-dependent pathway for proteasomal degradation.

The protein localises to the cytoplasm. It localises to the endoplasmic reticulum. It is found in the perinuclear region. The protein resides in the cytoskeleton. Its subcellular location is the microtubule organizing center. The protein localises to the centrosome. It catalyses the reaction Thiol-dependent hydrolysis of ester, thioester, amide, peptide and isopeptide bonds formed by the C-terminal Gly of ubiquitin (a 76-residue protein attached to proteins as an intracellular targeting signal).. Its function is as follows. Deubiquitinating enzyme that plays a role in many cellular processes including autophagy, cellular antiviral response or membrane protein biogenesis. Attenuates TLR4-mediated NF-kappa-B signaling by cooperating with beta-arrestin-2/ARRB2 and inhibiting TRAF6 autoubiquitination. Promotes cellular antiviral responses by deconjugating 'Lys-33' and 'Lys-48'-linked ubiquitination of STING1 leading to its stabilization. Plays an essential role in autophagy induction by regulating the ULK1 stability through deubiquitination of ULK1. Acts as a positive regulator for NF-kappa-B activation by TNF-alpha through deubiquitinating 'Lys-48'-linked polyubiquitination of SQSTM1, leading to its increased stability. Acts as a regulator of G-protein coupled receptor (GPCR) signaling by mediating the deubiquitination beta-2 adrenergic receptor (ADRB2). Plays a central role in ADRB2 recycling and resensitization after prolonged agonist stimulation by constitutively binding ADRB2, mediating deubiquitination of ADRB2 and inhibiting lysosomal trafficking of ADRB2. Upon dissociation, it is probably transferred to the translocated beta-arrestins, possibly leading to beta-arrestins deubiquitination and disengagement from ADRB2. This suggests the existence of a dynamic exchange between the ADRB2 and beta-arrestins. Deubiquitinates DIO2, thereby regulating thyroid hormone regulation. Deubiquitinates HIF1A, leading to stabilize HIF1A and enhance HIF1A-mediated activity. Deubiquitinates MCL1, a pivotal member of the anti-apoptotic Bcl-2 protein family to regulate its stability. Within the endoplasmic reticulum, participates with USP33 in the rescue of post-translationally targeted membrane proteins that are inappropriately ubiquitinated by the cytosolic protein quality control in the cytosol. The protein is Ubiquitin carboxyl-terminal hydrolase 20 (Usp20) of Mus musculus (Mouse).